The following is a 99-amino-acid chain: Small ribosomal subunit protein uS19c (99 aa).

It belongs to the universal ribosomal protein uS19 family.

The protein resides in the plastid. It localises to the chloroplast. Functionally, protein S19 forms a complex with S13 that binds strongly to the 16S ribosomal RNA. The sequence is that of Small ribosomal subunit protein uS19c from Oenothera biennis (German evening primrose).